Reading from the N-terminus, the 151-residue chain is 3-hydroxyacyl-[acyl-carrier-protein] dehydratase FabZ (151 aa).

Residue H54 is part of the active site.

This sequence belongs to the thioester dehydratase family. FabZ subfamily.

It is found in the cytoplasm. The enzyme catalyses a (3R)-hydroxyacyl-[ACP] = a (2E)-enoyl-[ACP] + H2O. In terms of biological role, involved in unsaturated fatty acids biosynthesis. Catalyzes the dehydration of short chain beta-hydroxyacyl-ACPs and long chain saturated and unsaturated beta-hydroxyacyl-ACPs. The polypeptide is 3-hydroxyacyl-[acyl-carrier-protein] dehydratase FabZ (Erwinia tasmaniensis (strain DSM 17950 / CFBP 7177 / CIP 109463 / NCPPB 4357 / Et1/99)).